A 69-amino-acid polypeptide reads, in one-letter code: Rubredoxin-1 (69 aa).

One can recognise a Rubredoxin-like domain in the interval 14 to 69 (QASWMCAECGYIYDPAEGNLETNIRPGMPFDKLPDDWSCPVCNHPKNQFTKFISQL). Residues Cys19, Cys22, Cys52, and Cys55 each contribute to the Fe cation site.

This sequence belongs to the rubredoxin family. In terms of assembly, monomer. Fe(3+) serves as cofactor.

In terms of biological role, serves as an electron acceptor for pyruvate ferredoxin oxidoreductase (PFOR). This Chlorobaculum tepidum (strain ATCC 49652 / DSM 12025 / NBRC 103806 / TLS) (Chlorobium tepidum) protein is Rubredoxin-1 (rub1).